A 101-amino-acid polypeptide reads, in one-letter code: Small ribosomal subunit protein uS14 (101 aa).

The protein belongs to the universal ribosomal protein uS14 family. Part of the 30S ribosomal subunit. Contacts proteins S3 and S10.

In terms of biological role, binds 16S rRNA, required for the assembly of 30S particles and may also be responsible for determining the conformation of the 16S rRNA at the A site. The chain is Small ribosomal subunit protein uS14 from Histophilus somni (strain 2336) (Haemophilus somnus).